The following is a 116-amino-acid chain: Putative iron-sulfur cluster insertion protein ErpA (116 aa).

Residues Cys44, Cys108, and Cys110 each contribute to the iron-sulfur cluster site.

The protein belongs to the HesB/IscA family. In terms of assembly, homodimer. Iron-sulfur cluster serves as cofactor.

Its function is as follows. Required for insertion of 4Fe-4S clusters. The chain is Putative iron-sulfur cluster insertion protein ErpA from Herminiimonas arsenicoxydans.